Consider the following 105-residue polypeptide: Ribonuclease P protein component 4 (105 aa).

Zn(2+) is bound by residues C63, C66, C89, and C92.

This sequence belongs to the eukaryotic/archaeal RNase P protein component 4 family. In terms of assembly, consists of a catalytic RNA component and at least 4-5 protein subunits. Requires Zn(2+) as cofactor.

Its subcellular location is the cytoplasm. The catalysed reaction is Endonucleolytic cleavage of RNA, removing 5'-extranucleotides from tRNA precursor.. In terms of biological role, part of ribonuclease P, a protein complex that generates mature tRNA molecules by cleaving their 5'-ends. In Methanoculleus marisnigri (strain ATCC 35101 / DSM 1498 / JR1), this protein is Ribonuclease P protein component 4.